The following is a 445-amino-acid chain: Phosphoglucosamine mutase (445 aa).

The active-site Phosphoserine intermediate is S102. Mg(2+) contacts are provided by S102, D241, D243, and D245. Phosphoserine is present on S102.

It belongs to the phosphohexose mutase family. It depends on Mg(2+) as a cofactor. Post-translationally, activated by phosphorylation.

It catalyses the reaction alpha-D-glucosamine 1-phosphate = D-glucosamine 6-phosphate. Its function is as follows. Catalyzes the conversion of glucosamine-6-phosphate to glucosamine-1-phosphate. The polypeptide is Phosphoglucosamine mutase (Shewanella sp. (strain W3-18-1)).